Consider the following 186-residue polypeptide: Translation initiation factor IF-3 (186 aa).

It belongs to the IF-3 family. Monomer.

The protein localises to the cytoplasm. Functionally, IF-3 binds to the 30S ribosomal subunit and shifts the equilibrium between 70S ribosomes and their 50S and 30S subunits in favor of the free subunits, thus enhancing the availability of 30S subunits on which protein synthesis initiation begins. This chain is Translation initiation factor IF-3, found in Borreliella burgdorferi (strain ATCC 35210 / DSM 4680 / CIP 102532 / B31) (Borrelia burgdorferi).